We begin with the raw amino-acid sequence, 312 residues long: Ribonuclease Z (312 aa).

Histidine 61, histidine 63, aspartate 65, histidine 66, histidine 148, aspartate 216, and histidine 275 together coordinate Zn(2+). The active-site Proton acceptor is the aspartate 65.

Belongs to the RNase Z family. In terms of assembly, homodimer. The cofactor is Zn(2+).

The catalysed reaction is Endonucleolytic cleavage of RNA, removing extra 3' nucleotides from tRNA precursor, generating 3' termini of tRNAs. A 3'-hydroxy group is left at the tRNA terminus and a 5'-phosphoryl group is left at the trailer molecule.. Zinc phosphodiesterase, which displays some tRNA 3'-processing endonuclease activity. Probably involved in tRNA maturation, by removing a 3'-trailer from precursor tRNA. The chain is Ribonuclease Z from Clostridium tetani (strain Massachusetts / E88).